We begin with the raw amino-acid sequence, 379 residues long: MSEFLPFSRPAMGSEELAAVEEVLRSGWITTGPKNQQLEQAFCRLTGNRHAIAVCSATAGMHVALMALGIGPGDEVITPSLTWVSTLNMIALLGATPVMIDVDRDTLMVTPELIEAAITERTRAIVPVHYAGAPADIDAVHALGKRHGIAVIDDAAHAAGTYYRGRHVGESGTAIFSFHAIKNMSCAEGGMIVTDDDALADRMRSLKFHGLGVDAFDRQTHGRAPQAEVLTPGYKYNLADINAAIALVQLDKLAAHNARREQIAQRYLSELADTPFLPLARPAWPHQHAWHLFILRVDRESCGLSRDELMQQLKEQGIGTGLHFRAAHTQKYYRDRFPQLSLPETEWNSERICSIPLFPGMSDGDCDRVIAALRTLAER.

K182 carries the N6-(pyridoxal phosphate)lysine modification.

This sequence belongs to the DegT/DnrJ/EryC1 family. ArnB subfamily. Homodimer. Requires pyridoxal 5'-phosphate as cofactor.

It carries out the reaction UDP-4-amino-4-deoxy-beta-L-arabinose + 2-oxoglutarate = UDP-beta-L-threo-pentopyranos-4-ulose + L-glutamate. The protein operates within nucleotide-sugar biosynthesis; UDP-4-deoxy-4-formamido-beta-L-arabinose biosynthesis; UDP-4-deoxy-4-formamido-beta-L-arabinose from UDP-alpha-D-glucuronate: step 2/3. Its pathway is bacterial outer membrane biogenesis; lipopolysaccharide biosynthesis. In terms of biological role, catalyzes the conversion of UDP-4-keto-arabinose (UDP-Ara4O) to UDP-4-amino-4-deoxy-L-arabinose (UDP-L-Ara4N). The modified arabinose is attached to lipid A and is required for resistance to polymyxin and cationic antimicrobial peptides. The chain is UDP-4-amino-4-deoxy-L-arabinose--oxoglutarate aminotransferase from Erwinia tasmaniensis (strain DSM 17950 / CFBP 7177 / CIP 109463 / NCPPB 4357 / Et1/99).